The chain runs to 318 residues: Protoheme IX farnesyltransferase (318 aa).

A run of 9 helical transmembrane segments spans residues 31–51 (IILL…QGPL), 55–75 (LAIA…TLNC), 98–118 (IQPF…FILL), 125–145 (LAAG…THGL), 153–173 (IVIG…AVTG), 181–201 (ILFA…ALMI), 206–228 (AAVK…QILA), 238–260 (LALA…LLGL), and 285–305 (FSIF…LPGA).

This sequence belongs to the UbiA prenyltransferase family. Protoheme IX farnesyltransferase subfamily.

It localises to the cell inner membrane. It carries out the reaction heme b + (2E,6E)-farnesyl diphosphate + H2O = Fe(II)-heme o + diphosphate. It participates in porphyrin-containing compound metabolism; heme O biosynthesis; heme O from protoheme: step 1/1. Functionally, converts heme B (protoheme IX) to heme O by substitution of the vinyl group on carbon 2 of heme B porphyrin ring with a hydroxyethyl farnesyl side group. The protein is Protoheme IX farnesyltransferase of Synechococcus elongatus (strain ATCC 33912 / PCC 7942 / FACHB-805) (Anacystis nidulans R2).